The chain runs to 620 residues: MSFDIAKYPTLALVDSTQELRLLPKESLPKLCDELRRYLLDSVSRSSGHFASGLGTVELTVALHYVYNTPFDRLIWDVGHQAYPHKILTGRRDKIGTIRQKGGLHPFPWRGESEYDVLSVGHSSTSISAGIGVAIAAAKEDKQRRAVCVIGDGAITAGMAFEAMNHAGDIKPDLLVVLNDNEMSISENVGALNNHLAQLLSGKLYSTLREGGKKVFSGVPPIKELLKRTEEHIKGMVVPGTLFEELGFNYIGPVDGHDVLGLVSTLKNMRDLKGPQFLHIMTKKGRGYEPAEKDPITFHAVPKFDHTSGVLPKSSGGLPSYSKIFGDWLCETAAKDNKLMAITPAMREGSGMVEFSKKFPDRYFDVAIAEQHAVTFAAGLAIGDYKPVVAIYSTFLQRAYDQVIHDVAIQKLPVLFTIDRAGIVGADGQTHQGAFDLSFLRCIPDMVVMTPSDENECRQMLYTGYHYSDGPCAVRYPRGSGTGATLEPLASLPIGKGVVKRQGEKIAILNFGTLLPEAAAVADKLNATLVDMRFVKPLDTALILQLAGEHDALVTLEENAIMGGAGSGVNEVLMAHRRAVPVLNIGLPDYFIPQGTQEEIRADLGLDAAGIEAKIRDWLA.

Thiamine diphosphate contacts are provided by residues His-80 and 121–123 (GHS). Asp-152 contacts Mg(2+). Thiamine diphosphate-binding positions include 153–154 (GA), Asn-181, Tyr-288, and Glu-370. Position 181 (Asn-181) interacts with Mg(2+).

This sequence belongs to the transketolase family. DXPS subfamily. As to quaternary structure, homodimer. Requires Mg(2+) as cofactor. The cofactor is thiamine diphosphate.

The catalysed reaction is D-glyceraldehyde 3-phosphate + pyruvate + H(+) = 1-deoxy-D-xylulose 5-phosphate + CO2. It functions in the pathway metabolic intermediate biosynthesis; 1-deoxy-D-xylulose 5-phosphate biosynthesis; 1-deoxy-D-xylulose 5-phosphate from D-glyceraldehyde 3-phosphate and pyruvate: step 1/1. Catalyzes the acyloin condensation reaction between C atoms 2 and 3 of pyruvate and glyceraldehyde 3-phosphate to yield 1-deoxy-D-xylulose-5-phosphate (DXP). This Klebsiella pneumoniae subsp. pneumoniae (strain ATCC 700721 / MGH 78578) protein is 1-deoxy-D-xylulose-5-phosphate synthase.